We begin with the raw amino-acid sequence, 545 residues long: CTP synthase (545 aa).

Residues 1 to 266 (MTTNYIFVTG…DDYICKRFSL (266 aa)) form an amidoligase domain region. Serine 14 is a binding site for CTP. A UTP-binding site is contributed by serine 14. Residues 15–20 (SLGKGI) and aspartate 72 each bind ATP. Mg(2+) is bound by residues aspartate 72 and glutamate 140. Residues 147-149 (DIE), 187-192 (KTKPTQ), and lysine 223 each bind CTP. UTP-binding positions include 187–192 (KTKPTQ) and lysine 223. 239-241 (KDV) is a binding site for ATP. The 252-residue stretch at 291 to 542 (TIGMVGKYIE…VKAASEFQKR (252 aa)) folds into the Glutamine amidotransferase type-1 domain. Position 352 (glycine 352) interacts with L-glutamine. Cysteine 379 serves as the catalytic Nucleophile; for glutamine hydrolysis. L-glutamine is bound by residues 380–383 (LGMQ), glutamate 403, and arginine 470. Active-site residues include histidine 515 and glutamate 517.

This sequence belongs to the CTP synthase family. In terms of assembly, homotetramer.

The enzyme catalyses UTP + L-glutamine + ATP + H2O = CTP + L-glutamate + ADP + phosphate + 2 H(+). It catalyses the reaction L-glutamine + H2O = L-glutamate + NH4(+). It carries out the reaction UTP + NH4(+) + ATP = CTP + ADP + phosphate + 2 H(+). Its pathway is pyrimidine metabolism; CTP biosynthesis via de novo pathway; CTP from UDP: step 2/2. With respect to regulation, allosterically activated by GTP, when glutamine is the substrate; GTP has no effect on the reaction when ammonia is the substrate. The allosteric effector GTP functions by stabilizing the protein conformation that binds the tetrahedral intermediate(s) formed during glutamine hydrolysis. Inhibited by the product CTP, via allosteric rather than competitive inhibition. Catalyzes the ATP-dependent amination of UTP to CTP with either L-glutamine or ammonia as the source of nitrogen. Regulates intracellular CTP levels through interactions with the four ribonucleotide triphosphates. This is CTP synthase from Escherichia coli O127:H6 (strain E2348/69 / EPEC).